The following is a 182-amino-acid chain: Putative manganese efflux pump MntP (182 aa).

A run of 6 helical transmembrane segments spans residues 6–26 (TVLVALALGCDAFAVGMGVGT), 37–57 (LSFHFGLFQMMMPIAGWFVGS), 59–79 (AADLVSTWGPWISFALLLFIG), 104–126 (SSLVMLSVATSMDALGVGFSFGI), 131–149 (LFLSAVWIGITAGIMTWGA), and 164–181 (METVGGLILVAIAVKLLL).

Belongs to the MntP (TC 9.B.29) family.

Its subcellular location is the cell inner membrane. Functionally, probably functions as a manganese efflux pump. The sequence is that of Putative manganese efflux pump MntP from Syntrophobacter fumaroxidans (strain DSM 10017 / MPOB).